The primary structure comprises 333 residues: Anthranilate phosphoribosyltransferase (333 aa).

5-phospho-alpha-D-ribose 1-diphosphate-binding positions include Gly-80, 83 to 84 (GD), Thr-88, 90 to 93 (NLST), 108 to 116 (KHGNRSASG), and Ser-120. Residue Gly-80 participates in anthranilate binding. Ser-92 is a binding site for Mg(2+). Asn-111 is a binding site for anthranilate. Arg-166 contacts anthranilate. Positions 224 and 225 each coordinate Mg(2+).

Belongs to the anthranilate phosphoribosyltransferase family. In terms of assembly, homodimer. Requires Mg(2+) as cofactor.

The enzyme catalyses N-(5-phospho-beta-D-ribosyl)anthranilate + diphosphate = 5-phospho-alpha-D-ribose 1-diphosphate + anthranilate. It functions in the pathway amino-acid biosynthesis; L-tryptophan biosynthesis; L-tryptophan from chorismate: step 2/5. Its function is as follows. Catalyzes the transfer of the phosphoribosyl group of 5-phosphorylribose-1-pyrophosphate (PRPP) to anthranilate to yield N-(5'-phosphoribosyl)-anthranilate (PRA). The sequence is that of Anthranilate phosphoribosyltransferase from Pyrobaculum aerophilum (strain ATCC 51768 / DSM 7523 / JCM 9630 / CIP 104966 / NBRC 100827 / IM2).